Reading from the N-terminus, the 710-residue chain is E3 ubiquitin-protein ligase TRIM9 (710 aa).

Residues 10-50 (CPVCGSFYREPIILPCSHNLCQACARNILVQTPESESPQSR) form an RING-type zinc finger. Threonine 41 bears the Phosphothreonine mark. 4 positions are modified to phosphoserine: serine 44, serine 46, serine 49, and serine 53. 2 B box-type zinc fingers span residues 163-212 (AAAL…LVPP) and 224-266 (RKVS…VKAL). Zn(2+)-binding residues include cysteine 168, cysteine 171, cysteine 193, histidine 198, cysteine 229, histidine 232, cysteine 252, and histidine 258. A coiled-coil region spans residues 273 to 340 (HKSQLSQALN…KAQLLARVNK (68 aa)). Residues 374 to 432 (IKENDPSGFLQISDALIRRVHLTEDQWGKGTLTPRMTTDFDLSLDNSPLLQSIHQLDFV) enclose the COS domain. Residues 440–535 (VPATPILQLE…KTLVLQTSEV (96 aa)) form the Fibronectin type-III domain. The B30.2/SPRY domain occupies 533–702 (SEVAWFAFDP…LHTGLPVPDF (170 aa)).

As to quaternary structure, interacts with SNAP25. Auto-ubiquitinated. Brain (at protein level). Expressed in fetal and adult brain.

Its subcellular location is the cytoplasmic vesicle. It localises to the secretory vesicle. The protein resides in the synaptic vesicle. It is found in the synapse. The protein localises to the cytoplasm. Its subcellular location is the cytoskeleton. It localises to the cell projection. The protein resides in the dendrite. The enzyme catalyses S-ubiquitinyl-[E2 ubiquitin-conjugating enzyme]-L-cysteine + [acceptor protein]-L-lysine = [E2 ubiquitin-conjugating enzyme]-L-cysteine + N(6)-ubiquitinyl-[acceptor protein]-L-lysine.. It participates in protein modification; protein ubiquitination. E3 ubiquitin-protein ligase which ubiquitinates itself in cooperation with an E2 enzyme UBE2D2/UBC4 and serves as a targeting signal for proteasomal degradation. May play a role in regulation of neuronal functions. May act as a regulator of synaptic vesicle exocytosis by controlling the availability of SNAP25 for the SNARE complex formation. This Rattus norvegicus (Rat) protein is E3 ubiquitin-protein ligase TRIM9 (Trim9).